The following is a 352-amino-acid chain: Protein-glutamate methylesterase/protein-glutamine glutaminase 2 (352 aa).

A Response regulatory domain is found at 6–124 (KVLIVEDSLV…NAGYDTMAAK (119 aa)). The residue at position 57 (Asp57) is a 4-aspartylphosphate. One can recognise a CheB-type methylesterase domain in the interval 162–343 (PGTYSMVGIV…LPLPAIAARL (182 aa)). Active-site residues include Ser173, His200, and Asp292.

It belongs to the CheB family. Phosphorylated by CheA. Phosphorylation of the N-terminal regulatory domain activates the methylesterase activity.

The protein localises to the cytoplasm. It catalyses the reaction [protein]-L-glutamate 5-O-methyl ester + H2O = L-glutamyl-[protein] + methanol + H(+). The catalysed reaction is L-glutaminyl-[protein] + H2O = L-glutamyl-[protein] + NH4(+). Functionally, involved in chemotaxis. Part of a chemotaxis signal transduction system that modulates chemotaxis in response to various stimuli. Catalyzes the demethylation of specific methylglutamate residues introduced into the chemoreceptors (methyl-accepting chemotaxis proteins or MCP) by CheR. Also mediates the irreversible deamidation of specific glutamine residues to glutamic acid. The polypeptide is Protein-glutamate methylesterase/protein-glutamine glutaminase 2 (Paramagnetospirillum magneticum (strain ATCC 700264 / AMB-1) (Magnetospirillum magneticum)).